We begin with the raw amino-acid sequence, 228 residues long: tRNA (guanine-N(1)-)-methyltransferase (228 aa).

S-adenosyl-L-methionine-binding positions include glycine 108 and 127-132 (VGDFIL).

This sequence belongs to the RNA methyltransferase TrmD family. Homodimer.

Its subcellular location is the cytoplasm. The enzyme catalyses guanosine(37) in tRNA + S-adenosyl-L-methionine = N(1)-methylguanosine(37) in tRNA + S-adenosyl-L-homocysteine + H(+). Specifically methylates guanosine-37 in various tRNAs. The protein is tRNA (guanine-N(1)-)-methyltransferase of Metamycoplasma arthritidis (strain 158L3-1) (Mycoplasma arthritidis).